A 373-amino-acid polypeptide reads, in one-letter code: tRNA-specific 2-thiouridylase MnmA (373 aa).

ATP is bound by residues 12–19 and M38; that span reads GMSGGVDS. The interaction with target base in tRNA stretch occupies residues 98–100; sequence NPD. C103 functions as the Nucleophile in the catalytic mechanism. An intrachain disulfide couples C103 to C200. G127 contributes to the ATP binding site. An interaction with tRNA region spans residues 150–152; that stretch reads KDQ. Catalysis depends on C200, which acts as the Cysteine persulfide intermediate. Residues 312 to 313 form an interaction with tRNA region; the sequence is RY.

It belongs to the MnmA/TRMU family.

It is found in the cytoplasm. The enzyme catalyses S-sulfanyl-L-cysteinyl-[protein] + uridine(34) in tRNA + AH2 + ATP = 2-thiouridine(34) in tRNA + L-cysteinyl-[protein] + A + AMP + diphosphate + H(+). Functionally, catalyzes the 2-thiolation of uridine at the wobble position (U34) of tRNA, leading to the formation of s(2)U34. The protein is tRNA-specific 2-thiouridylase MnmA of Streptococcus pyogenes serotype M6 (strain ATCC BAA-946 / MGAS10394).